The chain runs to 273 residues: 3-methyl-2-oxobutanoate hydroxymethyltransferase 1 (273 aa).

Aspartate 49 and aspartate 88 together coordinate Mg(2+). 3-methyl-2-oxobutanoate is bound by residues 49-50 (DS), aspartate 88, and lysine 118. Residue glutamate 120 participates in Mg(2+) binding. The active-site Proton acceptor is glutamate 187.

This sequence belongs to the PanB family. As to quaternary structure, homodecamer; pentamer of dimers. Mg(2+) is required as a cofactor.

Its subcellular location is the cytoplasm. The enzyme catalyses 3-methyl-2-oxobutanoate + (6R)-5,10-methylene-5,6,7,8-tetrahydrofolate + H2O = 2-dehydropantoate + (6S)-5,6,7,8-tetrahydrofolate. The protein operates within cofactor biosynthesis; (R)-pantothenate biosynthesis; (R)-pantoate from 3-methyl-2-oxobutanoate: step 1/2. Functionally, catalyzes the reversible reaction in which hydroxymethyl group from 5,10-methylenetetrahydrofolate is transferred onto alpha-ketoisovalerate to form ketopantoate. This Pseudomonas aeruginosa (strain UCBPP-PA14) protein is 3-methyl-2-oxobutanoate hydroxymethyltransferase 1.